The following is a 129-amino-acid chain: Mediator of RNA polymerase II transcription subunit 31-B (129 aa).

The protein belongs to the Mediator complex subunit 31 family. As to quaternary structure, component of the Mediator complex.

The protein localises to the nucleus. Component of the Mediator complex, a coactivator involved in the regulated transcription of nearly all RNA polymerase II-dependent genes. Mediator functions as a bridge to convey information from gene-specific regulatory proteins to the basal RNA polymerase II transcription machinery. Mediator is recruited to promoters by direct interactions with regulatory proteins and serves as a scaffold for the assembly of a functional preinitiation complex with RNA polymerase II and the general transcription factors. The chain is Mediator of RNA polymerase II transcription subunit 31-B (med31-b) from Xenopus laevis (African clawed frog).